The chain runs to 100 residues: MELLPREKDKLLVFTAALLAERRLNRGLKLNYPEAMAFITMEIIEGARDGKTVAELMAYGKTLLSAEQVMDGVVELIHEVQVEATFPDGTKLVTVHNPIN.

This sequence belongs to the urease gamma subunit family. In terms of assembly, heterotrimer of UreA (gamma), UreB (beta) and UreC (alpha) subunits. Three heterotrimers associate to form the active enzyme.

The protein resides in the cytoplasm. It carries out the reaction urea + 2 H2O + H(+) = hydrogencarbonate + 2 NH4(+). Its pathway is nitrogen metabolism; urea degradation; CO(2) and NH(3) from urea (urease route): step 1/1. The polypeptide is Urease subunit gamma (Marinomonas sp. (strain MWYL1)).